Here is a 362-residue protein sequence, read N- to C-terminus: Outer membrane porin protein OmpD (362 aa).

Residues Met-1 to Ala-21 form the signal peptide.

This sequence belongs to the Gram-negative porin family. In terms of assembly, homotrimer.

It is found in the cell outer membrane. Forms pores that allow passive diffusion of small molecules across the outer membrane. This is Outer membrane porin protein OmpD (ompD) from Salmonella choleraesuis (strain SC-B67).